Reading from the N-terminus, the 718-residue chain is Threonine--tRNA ligase, mitochondrial (718 aa).

At Ser52 the chain carries Phosphoserine. The region spanning 55-121 is the TGS domain; it reads QKEPRTIKIS…ETDSDLRFLT (67 aa).

Belongs to the class-II aminoacyl-tRNA synthetase family. Homodimer.

The protein resides in the mitochondrion matrix. It carries out the reaction tRNA(Thr) + L-threonine + ATP = L-threonyl-tRNA(Thr) + AMP + diphosphate + H(+). Functionally, catalyzes the attachment of threonine to tRNA(Thr) in a two-step reaction: threonine is first activated by ATP to form Thr-AMP and then transferred to the acceptor end of tRNA(Thr). Also edits incorrectly charged tRNA(Thr) via its editing domain. The protein is Threonine--tRNA ligase, mitochondrial (TARS2) of Homo sapiens (Human).